Reading from the N-terminus, the 275-residue chain is Hydroxyethylthiazole kinase (275 aa).

Met53 is a binding site for substrate. ATP-binding residues include Arg128 and Ser174. Residue Gly201 coordinates substrate.

Belongs to the Thz kinase family. Mg(2+) is required as a cofactor.

It catalyses the reaction 5-(2-hydroxyethyl)-4-methylthiazole + ATP = 4-methyl-5-(2-phosphooxyethyl)-thiazole + ADP + H(+). The protein operates within cofactor biosynthesis; thiamine diphosphate biosynthesis; 4-methyl-5-(2-phosphoethyl)-thiazole from 5-(2-hydroxyethyl)-4-methylthiazole: step 1/1. Its function is as follows. Catalyzes the phosphorylation of the hydroxyl group of 4-methyl-5-beta-hydroxyethylthiazole (THZ). The chain is Hydroxyethylthiazole kinase from Kineococcus radiotolerans (strain ATCC BAA-149 / DSM 14245 / SRS30216).